The chain runs to 226 residues: MLLHIPGLFDADELARIREALEQADWADGKATAGYQSAKAKHNLQLPEGHALAKEIGSALIDRLWKNPRFMSAALPHKVFPPLINCYREGGNFGFHIDNALRQPKGSPERVRTDLSSTLFLSDPDSYDGGELVIQDTYGEQQVKLAAGDLVLYPGTSLHKVNPVTRGVRYAAFFWTQSLVREDSQRALLFEMDNAIQQLTADVPEHPSLLQLTGTYHNLLRRWAEV.

Residues 78-178 (KVFPPLINCY…RYAAFFWTQS (101 aa)) form the Fe2OG dioxygenase domain. Fe cation-binding residues include His-96, Asp-98, and His-159. Arg-169 lines the 2-oxoglutarate pocket.

The cofactor is Fe(2+). Requires L-ascorbate as cofactor.

The sequence is that of PKHD-type hydroxylase PputW619_4316 from Pseudomonas putida (strain W619).